The sequence spans 505 residues: Lysine--tRNA ligase 1 (505 aa).

Residues aspartate 415 and glutamate 422 each contribute to the Mg(2+) site.

It belongs to the class-II aminoacyl-tRNA synthetase family. In terms of assembly, homodimer. Requires Mg(2+) as cofactor.

Its subcellular location is the cytoplasm. The catalysed reaction is tRNA(Lys) + L-lysine + ATP = L-lysyl-tRNA(Lys) + AMP + diphosphate. The polypeptide is Lysine--tRNA ligase 1 (lysS1) (Mycobacterium bovis (strain ATCC BAA-935 / AF2122/97)).